Consider the following 436-residue polypeptide: Serine hydroxymethyltransferase (436 aa).

(6S)-5,6,7,8-tetrahydrofolate contacts are provided by residues leucine 133 and glycine 137 to leucine 139. Lysine 242 is modified (N6-(pyridoxal phosphate)lysine). Residue serine 366–phenylalanine 368 coordinates (6S)-5,6,7,8-tetrahydrofolate.

Belongs to the SHMT family. As to quaternary structure, homodimer. Pyridoxal 5'-phosphate serves as cofactor.

The protein localises to the cytoplasm. The catalysed reaction is (6R)-5,10-methylene-5,6,7,8-tetrahydrofolate + glycine + H2O = (6S)-5,6,7,8-tetrahydrofolate + L-serine. Its pathway is one-carbon metabolism; tetrahydrofolate interconversion. It participates in amino-acid biosynthesis; glycine biosynthesis; glycine from L-serine: step 1/1. Catalyzes the reversible interconversion of serine and glycine with tetrahydrofolate (THF) serving as the one-carbon carrier. This reaction serves as the major source of one-carbon groups required for the biosynthesis of purines, thymidylate, methionine, and other important biomolecules. Also exhibits THF-independent aldolase activity toward beta-hydroxyamino acids, producing glycine and aldehydes, via a retro-aldol mechanism. This chain is Serine hydroxymethyltransferase, found in Novosphingobium aromaticivorans (strain ATCC 700278 / DSM 12444 / CCUG 56034 / CIP 105152 / NBRC 16084 / F199).